The primary structure comprises 37 residues: Omega-conotoxin-like S6.7 (37 aa).

A propeptide spanning residues 1-4 is cleaved from the precursor; that stretch reads KSTS. Intrachain disulfides connect Cys-5–Cys-20, Cys-12–Cys-23, and Cys-19–Cys-32.

The protein belongs to the conotoxin O1 superfamily. As to expression, expressed by the venom duct.

It is found in the secreted. Its function is as follows. Omega-conotoxins act at presynaptic membranes, they bind and block voltage-gated calcium channels (Cav). This toxin blocks N-, P- and Q-type calcium channels. This is Omega-conotoxin-like S6.7 from Conus striatus (Striated cone).